We begin with the raw amino-acid sequence, 45 residues long: Cytochrome b559 subunit beta (45 aa).

Residues 20 to 36 form a helical membrane-spanning segment; it reads WLALHTLGIPTVFFLGA. His24 lines the heme pocket.

It belongs to the PsbE/PsbF family. Heterodimer of an alpha subunit and a beta subunit. PSII is composed of 1 copy each of membrane proteins PsbA, PsbB, PsbC, PsbD, PsbE, PsbF, PsbH, PsbI, PsbJ, PsbK, PsbL, PsbM, PsbT, PsbX, PsbY, PsbZ, Psb30/Ycf12, peripheral proteins PsbO, CyanoQ (PsbQ), PsbU, PsbV and a large number of cofactors. It forms dimeric complexes. Heme b serves as cofactor.

The protein resides in the cellular thylakoid membrane. Functionally, this b-type cytochrome is tightly associated with the reaction center of photosystem II (PSII). PSII is a light-driven water:plastoquinone oxidoreductase that uses light energy to abstract electrons from H(2)O, generating O(2) and a proton gradient subsequently used for ATP formation. It consists of a core antenna complex that captures photons, and an electron transfer chain that converts photonic excitation into a charge separation. The protein is Cytochrome b559 subunit beta of Synechococcus sp. (strain CC9902).